The sequence spans 360 residues: Vignain (360 aa).

A signal peptide spans 1–20; the sequence is MQKFILLALSLALVLAITES. Residues 21–124 constitute a propeptide, activation peptide; sequence FDFHEKELES…NGTFMYEKVD (104 aa). N-linked (GlcNAc...) asparagine glycosylation is present at Asn115. 3 disulfides stabilise this stretch: Cys147/Cys189, Cys181/Cys222, and Cys280/Cys332. Residue Cys150 is part of the active site. Residues His286 and Asn307 contribute to the active site. The segment at 341–360 is disordered; it reads PIKKSSNNPSGIKSSPKDEL. Over residues 344–353 the composition is skewed to polar residues; it reads KSSNNPSGIK. Positions 354–360 are cleaved as a propeptide — removed in mature form; it reads SSPKDEL. The tract at residues 357–360 is prevents secretion from ER; that stretch reads KDEL.

This sequence belongs to the peptidase C1 family. Post-translationally, the potential N-glycosylation site at Asn-115 is not glycosylated.

The protein localises to the cytoplasmic vesicle. Low pH triggers activation of the protease and removal of the propeptide and the KDEL motif. Involved in programmed cell death. Shows a pronounced preference for hydrophobic residues in the P2 position and no obvious preference in the P1 position of the cleavage site. Accepts proline at the P1 and P1' positions. The chain is Vignain (CYSEP) from Ricinus communis (Castor bean).